Consider the following 139-residue polypeptide: Large ribosomal subunit protein uL16c (139 aa).

The protein belongs to the universal ribosomal protein uL16 family. As to quaternary structure, part of the 50S ribosomal subunit.

Its subcellular location is the plastid. The protein localises to the chloroplast. This is Large ribosomal subunit protein uL16c from Cryptomeria japonica (Japanese cedar).